Here is a 254-residue protein sequence, read N- to C-terminus: uncharacterized protein (254 aa).

This is an uncharacterized protein from Acheta domesticus (House cricket).